Reading from the N-terminus, the 366-residue chain is Flagellar P-ring protein (366 aa).

Positions 1–20 (MVIKFLSALILLLVTTAVQA) are cleaved as a signal peptide.

Belongs to the FlgI family. As to quaternary structure, the basal body constitutes a major portion of the flagellar organelle and consists of four rings (L,P,S, and M) mounted on a central rod.

The protein resides in the periplasm. It localises to the bacterial flagellum basal body. Assembles around the rod to form the L-ring and probably protects the motor/basal body from shearing forces during rotation. The protein is Flagellar P-ring protein of Escherichia coli O6:H1 (strain CFT073 / ATCC 700928 / UPEC).